The primary structure comprises 156 residues: Calcium-binding protein A (156 aa).

EF-hand domains follow at residues 4–39 (AITK…TGSK), 40–75 (DPLR…VAAK), 80–115 (AINN…NNPD), and 118–153 (APLM…YKSL). Asp-17, Asn-19, Asp-21, Asn-23, Glu-28, Asp-53, Asp-55, Asp-57, Glu-64, Asp-93, Asp-95, Asp-97, Arg-99, Glu-104, Asp-131, Asp-133, Asp-135, and Glu-142 together coordinate Ca(2+).

The protein is Calcium-binding protein A (cbpA) of Dictyostelium discoideum (Social amoeba).